Reading from the N-terminus, the 135-residue chain is Small ribosomal subunit protein uS11 (135 aa).

Belongs to the universal ribosomal protein uS11 family. In terms of assembly, part of the 30S ribosomal subunit. Interacts with proteins S7 and S18. Binds to IF-3.

Functionally, located on the platform of the 30S subunit, it bridges several disparate RNA helices of the 16S rRNA. Forms part of the Shine-Dalgarno cleft in the 70S ribosome. This Solibacter usitatus (strain Ellin6076) protein is Small ribosomal subunit protein uS11.